Reading from the N-terminus, the 326-residue chain is Polycomb complex protein BMI-1 (326 aa).

The segment at 18–57 (CVLCGGYFIDATTIIECLHSFCKTCIVRYLETSKYCPICD) adopts an RING-type zinc-finger fold. The Nuclear localization signal motif lies at 81-95 (KLVPGLFKNEMKRRR). The segment at 162–182 (RYLRCPAAMTVMHLRKFLRSK) is interaction with PHC2. Positions 164 to 228 (LRCPAAMTVM…GPLPLKYRVR (65 aa)) are interaction with E4F1. The interval 236 to 326 (ISHQRDGLTN…VNGSSATSSG (91 aa)) is disordered. 3 stretches are compositionally biased toward low complexity: residues 266 to 278 (PSTSSCLPSPSTP), 290 to 303 (SSTMNGTSSSPSGN), and 315 to 326 (SSVNGSSATSSG).

In terms of assembly, component of a PRC1-like complex. Identified in a PRC1-like HPRC-H complex with CBX2, CBX4, CBX8, PHC1, PHC2, PHC3 RING1 and RNF2. Interacts with RNF2/RING2. Interacts with RING1. Part of a complex that contains RNF2, UB2D3 and BMI1, where RNF2 and BMI1 form a tight heterodimer, and UB2D3 interacts only with RNF2. The complex composed of RNF2, UB2D3 and BMI1 binds nucleosomes, and has activity only with nucleosomal histone H2A. Interacts with CBX7 and CBX8. Interacts with SPOP. Part of a complex consisting of BMI1, CUL3 and SPOP. Interacts with E4F1. Interacts with PHC2. Interacts with zinc finger protein ZNF277. May be part of a complex including at least ZNF277, BMI1 and RNF2/RING2. May be polyubiquitinated; which does not lead to proteasomal degradation. Monoubiquitinated.

The protein localises to the nucleus. It is found in the cytoplasm. Its function is as follows. Component of a Polycomb group (PcG) multiprotein PRC1-like complex, a complex class required to maintain the transcriptionally repressive state of many genes, including Hox genes, throughout development. PcG PRC1 complex acts via chromatin remodeling and modification of histones; it mediates monoubiquitination of histone H2A 'Lys-119', rendering chromatin heritably changed in its expressibility. The complex composed of RNF2, UB2D3 and BMI1 binds nucleosomes, and has activity only with nucleosomal histone H2A. In the PRC1-like complex, regulates the E3 ubiquitin-protein ligase activity of RNF2/RING2. The chain is Polycomb complex protein BMI-1 (BMI1) from Bos taurus (Bovine).